Here is a 395-residue protein sequence, read N- to C-terminus: Membrane glycoprotein spo14 (395 aa).

Over methionine 1–arginine 346 the chain is Cytoplasmic. 2 WD repeats span residues methionine 250–serine 285 and lysine 290–phenylalanine 326. A helical; Signal-anchor for type II membrane protein transmembrane segment spans residues leucine 347–proline 367. Over aspartate 368 to leucine 395 the chain is Lumenal.

Its subcellular location is the endoplasmic reticulum membrane. It localises to the golgi apparatus. The protein localises to the cis-Golgi network membrane. Required for the formation of transport vesicles from the ER. This function involves the cytoplasmic domain of the protein, which is thought to interact with the small GTP-binding protein sar1. The chain is Membrane glycoprotein spo14 (spo14) from Schizosaccharomyces pombe (strain 972 / ATCC 24843) (Fission yeast).